Consider the following 244-residue polypeptide: tRNA (guanine-N(1)-)-methyltransferase (244 aa).

Residues Gly-120 and 140 to 145 (IGDYIL) each bind S-adenosyl-L-methionine.

It belongs to the RNA methyltransferase TrmD family. In terms of assembly, homodimer.

It is found in the cytoplasm. It catalyses the reaction guanosine(37) in tRNA + S-adenosyl-L-methionine = N(1)-methylguanosine(37) in tRNA + S-adenosyl-L-homocysteine + H(+). Specifically methylates guanosine-37 in various tRNAs. The sequence is that of tRNA (guanine-N(1)-)-methyltransferase from Brucella canis (strain ATCC 23365 / NCTC 10854 / RM-666).